The sequence spans 282 residues: MSNKIINLGSIEIANDKPFVLFGGMNVLESRDLAMSIAETYAEVTQKLGIPYVFKASFDKANRSSINSYRGPGMEEGLKIFEEIKKTFNLPLITDVHEVHQCAPVAEVVDIIQLPAFLARQTDLVVAMAKTGAIINVKKPQFLAPHEMRHIITKFNEAGNDEIILCERGSSFGYNNLVVDMLGMDEMKQSGYPVIFDATHALQRPGGRADSAGGRRAQATELARSGMALGLAGLFIEAHPDPDNAKCDGPCALPLHQLENYLKQMKAIDDLVKSFEPIDTSK.

Belongs to the KdsA family.

The protein localises to the cytoplasm. The enzyme catalyses D-arabinose 5-phosphate + phosphoenolpyruvate + H2O = 3-deoxy-alpha-D-manno-2-octulosonate-8-phosphate + phosphate. It participates in carbohydrate biosynthesis; 3-deoxy-D-manno-octulosonate biosynthesis; 3-deoxy-D-manno-octulosonate from D-ribulose 5-phosphate: step 2/3. The protein operates within bacterial outer membrane biogenesis; lipopolysaccharide biosynthesis. This Shewanella baltica (strain OS223) protein is 2-dehydro-3-deoxyphosphooctonate aldolase.